The primary structure comprises 110 residues: DNA-binding protein Tneu_1679 (110 aa).

This sequence belongs to the PDCD5 family.

The sequence is that of DNA-binding protein Tneu_1679 from Pyrobaculum neutrophilum (strain DSM 2338 / JCM 9278 / NBRC 100436 / V24Sta) (Thermoproteus neutrophilus).